A 357-amino-acid polypeptide reads, in one-letter code: Phosphoribosylformylglycinamidine cyclo-ligase (357 aa).

It belongs to the AIR synthase family.

Its subcellular location is the cytoplasm. The enzyme catalyses 2-formamido-N(1)-(5-O-phospho-beta-D-ribosyl)acetamidine + ATP = 5-amino-1-(5-phospho-beta-D-ribosyl)imidazole + ADP + phosphate + H(+). Its pathway is purine metabolism; IMP biosynthesis via de novo pathway; 5-amino-1-(5-phospho-D-ribosyl)imidazole from N(2)-formyl-N(1)-(5-phospho-D-ribosyl)glycinamide: step 2/2. The polypeptide is Phosphoribosylformylglycinamidine cyclo-ligase (Rhizobium etli (strain ATCC 51251 / DSM 11541 / JCM 21823 / NBRC 15573 / CFN 42)).